The sequence spans 200 residues: Putative TLC domain-containing protein L438 (200 aa).

One can recognise a TLC domain in the interval 1 to 193; it reads MDYKQSNLFL…ILKILRAKLF (193 aa). The next 6 helical transmembrane spans lie at 9–29, 43–63, 74–94, 96–116, 131–151, and 165–185; these read FLFP…CGTF, THGI…LMIV, VHHF…YYLI, YLFA…AIKY, LAFF…LWFV, and YLIV…YRIL.

It localises to the membrane. The polypeptide is Putative TLC domain-containing protein L438 (Acanthamoeba polyphaga mimivirus (APMV)).